We begin with the raw amino-acid sequence, 318 residues long: S-adenosylmethionine/S-adenosylhomocysteine transporter (318 aa).

Transmembrane regions (helical) follow at residues 7–27, 44–64, 76–96, 105–125, 134–154, 163–183, 193–213, 231–251, 262–282, and 285–305; these read FANL…AFIW, LFVT…LLLF, VMPI…LEFI, KACF…YVQL, LGGL…GGGE, LGMP…GWTL, SLSI…LSLA, LFLQ…YNLF, FLSF…WLLL, and SFPP…RLIY. Residues 25–148 enclose the EamA 1 domain; the sequence is FIWSSSFALS…LGLVSYLVYL (124 aa). Residues 191–304 form the EamA 2 domain; sequence CESLSITAIN…GFMVLGCRLI (114 aa).

It belongs to the drug/metabolite transporter (DMT) superfamily. 10 TMS drug/metabolite exporter (DME) (TC 2.A.7.3) family.

Its subcellular location is the cell membrane. Its function is as follows. Transports S-adenosylmethionine (SAM) and S-adenosylhomocysteine (SAH). Allows bacteria to acquire SAM from the eukaryotic host cell and to likely remove the toxic by-product SAH. This chain is S-adenosylmethionine/S-adenosylhomocysteine transporter, found in Chlamydia muridarum (strain MoPn / Nigg).